The sequence spans 308 residues: Glycine-rich protein GRP33 (308 aa).

In terms of domain architecture, KH spans 83–118 (DQFPKYNFLGKLLGPGGSTMKQLQDETMTKISILGR). Composition is skewed to gly residues over residues 203–220 (GPMGPQGRGRGRGRGGFS) and 273–294 (RGAGAGARGARGGLDQSRGGGK). 2 disordered regions span residues 203-222 (GPMGPQGRGRGRGRGGFSGP) and 270-308 (SPGRGAGAGARGARGGLDQSRGGGKFPSARGGRGRAAPY).

Post-translationally, the arginines in the Gly-rich domain might be methylated.

In Artemia salina (Brine shrimp), this protein is Glycine-rich protein GRP33.